We begin with the raw amino-acid sequence, 460 residues long: T-box transcription factor TBX1 (460 aa).

Disordered regions lie at residues 30-53 (LNTP…ESQF) and 67-99 (GSNS…TLVK). Residues 67–84 (GSNSAQAPAQGDSGTSNC) are compositionally biased toward polar residues. A DNA-binding region (T-box) is located at residues 116–294 (LWDEFNQLGT…SNPFAKGFRD (179 aa)). Disordered regions lie at residues 317-355 (RTRN…DPTH) and 376-400 (PLTA…PDTL). Over residues 320–330 (NPMSSPPQQNG) the composition is skewed to polar residues. Basic and acidic residues predominate over residues 331–344 (TEKEDSRREYDRDP). The short motif at 418–429 (KTRPSPYPSPSI) is the Nuclear localization signal element.

As to quaternary structure, binds DNA as a dimer. Expressed in the ear and mesendodermal components of pharyngeal arches.

Its subcellular location is the nucleus. Functionally, probable transcriptional regulator involved in developmental processes. Binds to the palindromic T site 5'-TTCACACCTAGGTGTGAA-3' DNA sequence. Is required for normal development of the pharyngeal arch arteries. Acts cell autonomously in the pharyngeal mesendoderm and influences the development of neural crest-derived cartilages secondarily. The chain is T-box transcription factor TBX1 (tbx1) from Danio rerio (Zebrafish).